Consider the following 216-residue polypeptide: Endoplasmic reticulum vesicle protein 25 (216 aa).

A signal peptide spans 1–21 (MMVSLKSSLFFMLALLTVVHA). At 22–184 (LNFDIPAKTN…TNESTNERVK (163 aa)) the chain is on the lumenal side. In terms of domain architecture, GOLD spans 34–150 (PFCLREYVGE…LEPVEADIRR (117 aa)). A helical transmembrane segment spans residues 185–205 (NFAYLTFISLFVLVIWQILYL). Over 206-216 (RSFFQRKHLIP) the chain is Cytoplasmic.

This sequence belongs to the EMP24/GP25L family.

It is found in the endoplasmic reticulum membrane. The protein localises to the golgi apparatus membrane. In terms of biological role, constituent of COPII-coated endoplasmic reticulum-derived transport vesicles. Required for efficient transport of a subset of secretory proteins to the Golgi. Facilitates retrograde transport from the Golgi to the endoplasmic reticulum. This is Endoplasmic reticulum vesicle protein 25 (erv25) from Schizosaccharomyces pombe (strain 972 / ATCC 24843) (Fission yeast).